Consider the following 201-residue polypeptide: Anthranilate synthase component 2 (201 aa).

One can recognise a Glutamine amidotransferase type-1 domain in the interval K2–S201. G59 to G61 is an L-glutamine binding site. The active-site Nucleophile; for GATase activity is the C89. Residues Q93 and S139–L140 contribute to the L-glutamine site. Catalysis depends on for GATase activity residues H182 and E184.

In terms of assembly, heterotetramer consisting of two non-identical subunits: a beta subunit (TrpG) and a large alpha subunit (TrpE).

The catalysed reaction is chorismate + L-glutamine = anthranilate + pyruvate + L-glutamate + H(+). It participates in amino-acid biosynthesis; L-tryptophan biosynthesis; L-tryptophan from chorismate: step 1/5. Part of a heterotetrameric complex that catalyzes the two-step biosynthesis of anthranilate, an intermediate in the biosynthesis of L-tryptophan. In the first step, the glutamine-binding beta subunit (TrpG) of anthranilate synthase (AS) provides the glutamine amidotransferase activity which generates ammonia as a substrate that, along with chorismate, is used in the second step, catalyzed by the large alpha subunit of AS (TrpE) to produce anthranilate. In the absence of TrpG, TrpE can synthesize anthranilate directly from chorismate and high concentrations of ammonia. The chain is Anthranilate synthase component 2 (trpG) from Leptospira biflexa.